The sequence spans 547 residues: Chaperonin GroEL 1 (547 aa).

ATP contacts are provided by residues 30–33 (TLGP), K51, 87–91 (DGTTT), G415, and D496.

This sequence belongs to the chaperonin (HSP60) family. Forms a cylinder of 14 subunits composed of two heptameric rings stacked back-to-back. Interacts with the co-chaperonin GroES.

Its subcellular location is the cytoplasm. The enzyme catalyses ATP + H2O + a folded polypeptide = ADP + phosphate + an unfolded polypeptide.. Together with its co-chaperonin GroES, plays an essential role in assisting protein folding. The GroEL-GroES system forms a nano-cage that allows encapsulation of the non-native substrate proteins and provides a physical environment optimized to promote and accelerate protein folding. The chain is Chaperonin GroEL 1 from Rhodopseudomonas palustris (strain BisA53).